The following is a 448-amino-acid chain: NADP-specific glutamate dehydrogenase (448 aa).

Substrate-binding residues include K88, Q109, and K112. K124 acts as the Proton donor in catalysis. Residue G163 coordinates substrate. 2 residues coordinate NADP(+): T207 and N238. S375 contacts substrate.

This sequence belongs to the Glu/Leu/Phe/Val dehydrogenases family. Homohexamer.

It carries out the reaction L-glutamate + NADP(+) + H2O = 2-oxoglutarate + NH4(+) + NADPH + H(+). Functionally, catalyzes the reversible oxidative deamination of glutamate to alpha-ketoglutarate and ammonia. In Psychrobacter sp. (strain TAD1), this protein is NADP-specific glutamate dehydrogenase (gdhA).